Here is a 457-residue protein sequence, read N- to C-terminus: tRNA-2-methylthio-N(6)-dimethylallyladenosine synthase (457 aa).

The 118-residue stretch at lysine 3 to alanine 120 folds into the MTTase N-terminal domain. The [4Fe-4S] cluster site is built by cysteine 12, cysteine 49, cysteine 83, cysteine 157, cysteine 161, and cysteine 164. The 235-residue stretch at arginine 143 to arginine 377 folds into the Radical SAM core domain. Residues arginine 380 to leucine 447 form the TRAM domain.

Belongs to the methylthiotransferase family. MiaB subfamily. In terms of assembly, monomer. [4Fe-4S] cluster is required as a cofactor.

Its subcellular location is the cytoplasm. It catalyses the reaction N(6)-dimethylallyladenosine(37) in tRNA + (sulfur carrier)-SH + AH2 + 2 S-adenosyl-L-methionine = 2-methylsulfanyl-N(6)-dimethylallyladenosine(37) in tRNA + (sulfur carrier)-H + 5'-deoxyadenosine + L-methionine + A + S-adenosyl-L-homocysteine + 2 H(+). Functionally, catalyzes the methylthiolation of N6-(dimethylallyl)adenosine (i(6)A), leading to the formation of 2-methylthio-N6-(dimethylallyl)adenosine (ms(2)i(6)A) at position 37 in tRNAs that read codons beginning with uridine. The chain is tRNA-2-methylthio-N(6)-dimethylallyladenosine synthase from Burkholderia ambifaria (strain MC40-6).